Reading from the N-terminus, the 808-residue chain is MLMTKPPVPQLNLTVVREAAERAARAIPPLWPLESSVAVNPFLGQTGEPLAMAAARLRRVAGAAVTMPRTWYAERIASGELSDVDLAAAIDAAPPTTRPLTIAELKRAAQIEIAPPQALPTVAELASAVSGFDWTGFVAERISAWASGYFDRGQALWAAPKGPNAYAAWRLTATHDLTPEIFGLTGFAADVAAAPESADAALIRAVEQLGLSEAASESYFHRLLISLGGWAQLARYRLWQAELSGSTDTAVTDLIAIRAVWDSTLLRKYQPQIAAEWTDAINGYVQPLQPTEDDHINAILQDAVERAAQRKLQTVLAASAQPKPDDRPALQMAFCIDVRSEPFRRALESLDPRIRTLGFGGFFGLPIAHRRFASDVVEARLPVLLPPRVTTSCSGHTHAHEANDRAKRVAARAKRAWGRFKLAAISSFAFVESMGPVYVAKLLSDGLRSGTRRTNADPAPQFDPPLALGARVDTAEAVLRAMSLTGPFAPLVLIAGHGASVVNNPHASALHCGACGGFPGDVNARLLAGLLNDPQVRTALIGRDIAIPADTLFVGALHDTTTDAVTLYDADHPSPAHASALAQTRDWLATAGALTRSERALRLPRAATGGAIARRARDWAEVRPEWALAGCRAFIAAPRPHTSGRDLQGQAFLHDYDWRKDTDFSVLELILTAPVVVASWISLQYYGSTVAPETFGAGNKLLHNVTGGIGVVEGNGGLLRAGLPWQSVHDGERLVHQPLRLSVLIEAPHEAISTILDRYPEVRALFDNRWLHLFALDDDGRMNWRYVGDGGWEHADNPPTNQRVASFE.

Zn(2+) is bound by residues cysteine 335, aspartate 337, histidine 497, and cysteine 512.

Belongs to the inorganic carbon transporter (TC 9.A.2) DabA family. As to quaternary structure, forms a complex with DabB. Zn(2+) is required as a cofactor.

The protein localises to the cell inner membrane. Part of an energy-coupled inorganic carbon pump. In Rhodopseudomonas palustris (strain ATCC BAA-98 / CGA009), this protein is Probable inorganic carbon transporter subunit DabA.